A 743-amino-acid chain; its full sequence is MDSDYIFHNGDDIRNMGLEEMRRQKVLLASELKAIDAQISDLAFNNYGTYADAGRATHDCSKTFGEMRDKTVNLSDQAEELTSAFVEFRAKAKQLSEEQDLVRKALDKSNPIWELLTLPSRMDICIRAGYYDLAYTLTNYGLQLQQQTQLYRNPLIKKVADHLVEARAYLLEELFNKFAGPLDLAESIKVVNNVRKMPSLTANQLRIAVLQHRDIYLEKQILDISGNVDMIVQAIEIYRTSMYDTLVLYLAVFPENEVVRKNPNADPRWESWPVLPPNSILSQWVISNVKKMLDLITKADVKSAVDLSAVWTKLMAMASSFGRMGIDFRPLIAGKLTKLIEQRFRQNVQEATSRLTGSSRDIVMIGIDPASLPQFETAPDSPPVAAAELSLWDDMTIYTNSVVDALNGLRFILTPVVLSTVVVSLRDSIRSILTWLASSHSNSANFSRAVRIVCTSVAPFFEKCVAFFFPPATVSKIFGSSISKRQYLQFIELDMKQLAASCDGAEKIEEIVKPLLQKRTLEEIGLENVLKPTKPEEEKTKFFLEETVEDGPGLAEPQEEASESVKEQETTSELEKKHGTDFETAETQEMVSEPVKEHETTSELTKEQEPAFEPEKLHETPPEPMEPQNFGESEAKAAHNPEAHLELGETSENQEIREQEHKEVVITSTEPEFHEIDLNSAVLIPKIAVEPQLDPISEYLTELTQDDPIEEEEGWGWGDDDGEEQEISSKEVESPKEKCKKDD.

2 disordered regions span residues 549-672 (EDGP…TEPE) and 704-743 (TQDD…KKDD). Composition is skewed to basic and acidic residues over residues 563–581 (ESVK…HGTD), 594–621 (PVKE…HETP), 633–647 (SEAK…HLEL), and 654–664 (QEIREQEHKEV). Positions 704 to 726 (TQDDPIEEEEGWGWGDDDGEEQE) are enriched in acidic residues. A compositionally biased stretch (basic and acidic residues) spans 727–743 (ISSKEVESPKEKCKKDD).

It belongs to the COG8 family. As to quaternary structure, component of the conserved oligomeric Golgi complex which is composed of eight different subunits and is required for normal Golgi morphology and localization.

It is found in the golgi apparatus membrane. Functionally, required for normal Golgi function. This Caenorhabditis elegans protein is Conserved oligomeric Golgi complex subunit 8 (cogc-8).